The sequence spans 166 residues: Lipoprotein signal peptidase (166 aa).

The next 4 helical transmembrane spans lie at 11–31, 42–62, 67–87, and 90–110; these read VWLWLSLLLLVVDFASKTLVV, LLPVFSITYVHNYGAAYSFLS, WQRWFLSAIAIAISGLLVWWL, and LPATNKVLCAAYSLVLAGAIG. Active-site residues include D123 and D141. A helical membrane pass occupies residues 133-153; that stretch reads HFPVFNVADCAICIGAALLLF.

The protein belongs to the peptidase A8 family.

The protein localises to the cell inner membrane. The enzyme catalyses Release of signal peptides from bacterial membrane prolipoproteins. Hydrolyzes -Xaa-Yaa-Zaa-|-(S,diacylglyceryl)Cys-, in which Xaa is hydrophobic (preferably Leu), and Yaa (Ala or Ser) and Zaa (Gly or Ala) have small, neutral side chains.. The protein operates within protein modification; lipoprotein biosynthesis (signal peptide cleavage). Its function is as follows. This protein specifically catalyzes the removal of signal peptides from prolipoproteins. The protein is Lipoprotein signal peptidase of Pseudoalteromonas translucida (strain TAC 125).